A 318-amino-acid chain; its full sequence is MSFSSKVKNEVCRYDELEEKEAMALLSAIMRASGTLTFGRNKGIGFKIATENAAITRLVFKILKNILDIHTNIMIKKSNSFKKNNVYIIVINEEEGVKKLLEKTEVVKIEDIGFFINYNISENLVYDDNTKKAYIRGAFLGGGSVSNPEKTYHLEFVTNNEMYANKLSELINSYGLNSKVIQRKSNFIIYIKEGEQISDLLNIIGAHSSLLQLENIRIMKDMRNNINRIVNCETANLSKTVNAAVRQIESINLINKEIGLKRLPKNLRDMAEIRLKYPDVSLKELGEMLSPPVGKSGVNHRLRRIEKIAEELSKEGNF.

Positions 281–314 form a DNA-binding region, H-T-H motif; that stretch reads SLKELGEMLSPPVGKSGVNHRLRRIEKIAEELSK.

It belongs to the WhiA family.

Functionally, involved in cell division and chromosome segregation. The polypeptide is Probable cell division protein WhiA (Clostridium tetani (strain Massachusetts / E88)).